The sequence spans 475 residues: Protein arginine N-methyltransferase 2 (475 aa).

The segment at 167–194 (EFLSDDDDEEMDVDDDEEDESRDGEETG) is disordered. Residues 169 to 194 (LSDDDDEEMDVDDDEEDESRDGEETG) are compositionally biased toward acidic residues. An RMT2 domain is found at 247–475 (LAGSQMDYLK…EDFYLPVCTF (229 aa)). S-adenosyl-L-methionine contacts are provided by residues Tyr-254, Met-285, 310-315 (FGLGII), 331-333 (EAH), 358-359 (WQ), and Asp-378.

This sequence belongs to the class I-like SAM-binding methyltransferase superfamily. RMT2 methyltransferase family. In terms of assembly, monomer.

The protein resides in the cytoplasm. It localises to the nucleus. Its function is as follows. S-adenosyl-L-methionine-dependent protein-arginine N-methyltransferase that methylates the delta-nitrogen atom of arginine residues to form N5-methylarginine (type IV) in target proteins. Monomethylates ribosomal protein L12. In Yarrowia lipolytica (strain CLIB 122 / E 150) (Yeast), this protein is Protein arginine N-methyltransferase 2.